The sequence spans 259 residues: Ubiquinone biosynthesis protein COQ4 homolog, mitochondrial (259 aa).

Histidine 162, aspartate 163, histidine 166, and glutamate 178 together coordinate Zn(2+).

Belongs to the COQ4 family. Component of a multi-subunit COQ enzyme complex. The cofactor is Zn(2+).

The protein resides in the mitochondrion inner membrane. The catalysed reaction is a 4-hydroxy-3-methoxy-5-(all-trans-polyprenyl)benzoate + H(+) = a 2-methoxy-6-(all-trans-polyprenyl)phenol + CO2. It functions in the pathway cofactor biosynthesis; ubiquinone biosynthesis. Functionally, lyase that catalyzes the C1-decarboxylation of 4-hydroxy-3-methoxy-5-(all-trans-polyprenyl)benzoic acid into 2-methoxy-6-(all-trans-polyprenyl)phenol during ubiquinone biosynthesis. The protein is Ubiquinone biosynthesis protein COQ4 homolog, mitochondrial of Bombyx mori (Silk moth).